A 225-amino-acid chain; its full sequence is Ribonuclease 3 (225 aa).

An RNase III domain is found at 4 to 127 (IEKLEQSLTY…IIGAIHLEAG (124 aa)). A Mg(2+)-binding site is contributed by E40. The active site involves D44. Residues D113 and E116 each contribute to the Mg(2+) site. Residue E116 is part of the active site. One can recognise a DRBM domain in the interval 154–223 (DYKTKLQEIT…AKIALEKLGS (70 aa)).

Belongs to the ribonuclease III family. In terms of assembly, homodimer. The cofactor is Mg(2+).

The protein localises to the cytoplasm. It catalyses the reaction Endonucleolytic cleavage to 5'-phosphomonoester.. Functionally, digests double-stranded RNA. Involved in the processing of primary rRNA transcript to yield the immediate precursors to the large and small rRNAs (23S and 16S). Processes some mRNAs, and tRNAs when they are encoded in the rRNA operon. Processes pre-crRNA and tracrRNA of type II CRISPR loci if present in the organism. This is Ribonuclease 3 from Campylobacter jejuni subsp. doylei (strain ATCC BAA-1458 / RM4099 / 269.97).